The primary structure comprises 743 residues: Putative cation exchanger C3A12.06c (743 aa).

The next 13 helical transmembrane spans lie at 13–33, 109–129, 138–158, 182–202, 213–233, 239–258, 528–548, 551–571, 580–600, 609–629, 649–669, 690–710, and 718–738; these read LILL…HRIS, FPVL…IGIS, LVTI…TFLA, IGEL…SVCL, FLRD…FVLH, IWQS…FVFF, LRLL…ITGG, LYIY…LYYY, FLPW…STIA, ALGV…FAAG, MAMG…IGIS, LSIT…YVPL, and VLGL…IVVE.

Belongs to the Ca(2+):cation antiporter (CaCA) (TC 2.A.19) family.

It is found in the endoplasmic reticulum membrane. In terms of biological role, putative cation exchanger. This chain is Putative cation exchanger C3A12.06c, found in Schizosaccharomyces pombe (strain 972 / ATCC 24843) (Fission yeast).